We begin with the raw amino-acid sequence, 252 residues long: Imidazole glycerol phosphate synthase subunit HisF (252 aa).

Residues Asp-11 and Asp-130 contribute to the active site.

Belongs to the HisA/HisF family. As to quaternary structure, heterodimer of HisH and HisF.

It localises to the cytoplasm. The catalysed reaction is 5-[(5-phospho-1-deoxy-D-ribulos-1-ylimino)methylamino]-1-(5-phospho-beta-D-ribosyl)imidazole-4-carboxamide + L-glutamine = D-erythro-1-(imidazol-4-yl)glycerol 3-phosphate + 5-amino-1-(5-phospho-beta-D-ribosyl)imidazole-4-carboxamide + L-glutamate + H(+). It participates in amino-acid biosynthesis; L-histidine biosynthesis; L-histidine from 5-phospho-alpha-D-ribose 1-diphosphate: step 5/9. Functionally, IGPS catalyzes the conversion of PRFAR and glutamine to IGP, AICAR and glutamate. The HisF subunit catalyzes the cyclization activity that produces IGP and AICAR from PRFAR using the ammonia provided by the HisH subunit. This Lactiplantibacillus plantarum (strain ATCC BAA-793 / NCIMB 8826 / WCFS1) (Lactobacillus plantarum) protein is Imidazole glycerol phosphate synthase subunit HisF.